Here is a 125-residue protein sequence, read N- to C-terminus: Large ribosomal subunit protein eL31 (125 aa).

Methionine 1 is subject to N-acetylmethionine. Serine 15 bears the Phosphoserine mark. N6-succinyllysine is present on residues lysine 55 and lysine 70. Lysine 75 carries the post-translational modification N6-acetyllysine; alternate. Lysine 75 carries the post-translational modification N6-succinyllysine; alternate. Serine 98 bears the Phosphoserine mark.

It belongs to the eukaryotic ribosomal protein eL31 family. In terms of assembly, component of the large ribosomal subunit.

The protein resides in the cytoplasm. Its function is as follows. Component of the large ribosomal subunit. The ribosome is a large ribonucleoprotein complex responsible for the synthesis of proteins in the cell. In Oryctolagus cuniculus (Rabbit), this protein is Large ribosomal subunit protein eL31 (RPL31).